A 326-amino-acid polypeptide reads, in one-letter code: Putative HTH-type transcriptional regulator y4qH (326 aa).

One can recognise an HTH luxR-type domain in the interval 257 to 322; sequence AVQKIPALSL…VAAIKAISLG (66 aa). Residues 281–300 constitute a DNA-binding region (H-T-H motif); sequence SWDIGVIMRISENTVNFHIK.

Belongs to the autoinducer-regulated transcriptional regulatory protein family.

The chain is Putative HTH-type transcriptional regulator y4qH from Sinorhizobium fredii (strain NBRC 101917 / NGR234).